A 78-amino-acid polypeptide reads, in one-letter code: DNA-directed RNA polymerase subunit omega (78 aa).

This sequence belongs to the RNA polymerase subunit omega family. As to quaternary structure, in cyanobacteria the RNAP catalytic core is composed of 2 alpha, 1 beta, 1 beta', 1 gamma and 1 omega subunit. When a sigma factor is associated with the core the holoenzyme is formed, which can initiate transcription.

It catalyses the reaction RNA(n) + a ribonucleoside 5'-triphosphate = RNA(n+1) + diphosphate. Promotes RNA polymerase assembly. Latches the N- and C-terminal regions of the beta' subunit thereby facilitating its interaction with the beta and alpha subunits. The chain is DNA-directed RNA polymerase subunit omega from Prochlorococcus marinus (strain MIT 9301).